We begin with the raw amino-acid sequence, 336 residues long: uncharacterized protein (336 aa).

Positions 196-222 are disordered; the sequence is YKEGDDSNWDDFGSESEDDSKEAHSEE. The span at 201–215 shows a compositional bias: acidic residues; sequence DSNWDDFGSESEDDS. At serine 211 the chain carries Phosphoserine.

This is an uncharacterized protein from Schizosaccharomyces pombe (strain 972 / ATCC 24843) (Fission yeast).